Here is a 243-residue protein sequence, read N- to C-terminus: 1-(5-phosphoribosyl)-5-[(5-phosphoribosylamino)methylideneamino] imidazole-4-carboxamide isomerase (243 aa).

Residue aspartate 14 is the Proton acceptor of the active site. The active-site Proton donor is the aspartate 135.

Belongs to the HisA/HisF family.

The protein resides in the cytoplasm. It carries out the reaction 1-(5-phospho-beta-D-ribosyl)-5-[(5-phospho-beta-D-ribosylamino)methylideneamino]imidazole-4-carboxamide = 5-[(5-phospho-1-deoxy-D-ribulos-1-ylimino)methylamino]-1-(5-phospho-beta-D-ribosyl)imidazole-4-carboxamide. Its pathway is amino-acid biosynthesis; L-histidine biosynthesis; L-histidine from 5-phospho-alpha-D-ribose 1-diphosphate: step 4/9. The chain is 1-(5-phosphoribosyl)-5-[(5-phosphoribosylamino)methylideneamino] imidazole-4-carboxamide isomerase from Rubrobacter xylanophilus (strain DSM 9941 / JCM 11954 / NBRC 16129 / PRD-1).